A 694-amino-acid chain; its full sequence is Elongation factor G (694 aa).

The region spanning 8–282 (KDYRNIGIMA…AVIDYLPSPV (275 aa)) is the tr-type G domain. GTP-binding positions include 17–24 (AHIDAGKT), 81–85 (DTPGH), and 135–138 (NKMD).

The protein belongs to the TRAFAC class translation factor GTPase superfamily. Classic translation factor GTPase family. EF-G/EF-2 subfamily.

Its subcellular location is the cytoplasm. Catalyzes the GTP-dependent ribosomal translocation step during translation elongation. During this step, the ribosome changes from the pre-translocational (PRE) to the post-translocational (POST) state as the newly formed A-site-bound peptidyl-tRNA and P-site-bound deacylated tRNA move to the P and E sites, respectively. Catalyzes the coordinated movement of the two tRNA molecules, the mRNA and conformational changes in the ribosome. In Mesomycoplasma hyopneumoniae (strain J / ATCC 25934 / NCTC 10110) (Mycoplasma hyopneumoniae), this protein is Elongation factor G.